The primary structure comprises 204 residues: Urease accessory protein UreG (204 aa).

13–20 (GPVGSGKT) is a GTP binding site.

It belongs to the SIMIBI class G3E GTPase family. UreG subfamily. Homodimer. UreD, UreF and UreG form a complex that acts as a GTP-hydrolysis-dependent molecular chaperone, activating the urease apoprotein by helping to assemble the nickel containing metallocenter of UreC. The UreE protein probably delivers the nickel.

It localises to the cytoplasm. Facilitates the functional incorporation of the urease nickel metallocenter. This process requires GTP hydrolysis, probably effectuated by UreG. The sequence is that of Urease accessory protein UreG from Acinetobacter baumannii (strain AB307-0294).